A 497-amino-acid polypeptide reads, in one-letter code: Dihydrolipoyl dehydrogenase (497 aa).

FAD is bound by residues 60–69 (EKEPSLGGTC), Lys-78, Gly-142, and 170–172 (TGS). An intrachain disulfide couples Cys-69 to Cys-74. NAD(+) is bound by residues 207 to 214 (GAGVIGLE), Glu-230, Val-264, and Gly-302. FAD contacts are provided by residues Asp-343 and 349–352 (MLAH). His-475 serves as the catalytic Proton acceptor.

It belongs to the class-I pyridine nucleotide-disulfide oxidoreductase family. As to quaternary structure, homodimer. FAD is required as a cofactor.

The protein resides in the cytoplasm. The enzyme catalyses N(6)-[(R)-dihydrolipoyl]-L-lysyl-[protein] + NAD(+) = N(6)-[(R)-lipoyl]-L-lysyl-[protein] + NADH + H(+). This Manduca sexta (Tobacco hawkmoth) protein is Dihydrolipoyl dehydrogenase.